A 342-amino-acid chain; its full sequence is Trans-3-hydroxy-L-proline dehydratase (342 aa).

Catalysis depends on S90, which acts as the Proton acceptor. Substrate is bound by residues G91–S92, D252, and G257–T258.

This sequence belongs to the proline racemase family.

The enzyme catalyses trans-3-hydroxy-L-proline = 1-pyrroline-2-carboxylate + H2O. In terms of biological role, catalyzes the dehydration of trans-3-hydroxy-L-proline (t3LHyp) to Delta(1)-pyrroline-2-carboxylate (Pyr2C). Can also catalyze the epimerization of trans-4-hydroxy-L-proline (t4LHyp) to cis-4-hydroxy-D-proline (c4DHyp), albeit with 150-fold lower efficiency. May be involved in the degradation pathway that converts t3LHyp to L-proline, which would allow R.meliloti to grow on t3LHyp as a sole carbon source. Displays no proline racemase activity. This Rhizobium meliloti (strain 1021) (Ensifer meliloti) protein is Trans-3-hydroxy-L-proline dehydratase.